A 339-amino-acid chain; its full sequence is tRNA N6-adenosine threonylcarbamoyltransferase (339 aa).

2 residues coordinate Fe cation: His114 and His118. Residues 137-141, Asp170, Gly183, Asp187, and Asn277 contribute to the substrate site; that span reads VVSGG. Fe cation is bound at residue Asp305.

It belongs to the KAE1 / TsaD family. It depends on Fe(2+) as a cofactor.

The protein localises to the cytoplasm. The enzyme catalyses L-threonylcarbamoyladenylate + adenosine(37) in tRNA = N(6)-L-threonylcarbamoyladenosine(37) in tRNA + AMP + H(+). Required for the formation of a threonylcarbamoyl group on adenosine at position 37 (t(6)A37) in tRNAs that read codons beginning with adenine. Is involved in the transfer of the threonylcarbamoyl moiety of threonylcarbamoyl-AMP (TC-AMP) to the N6 group of A37, together with TsaE and TsaB. TsaD likely plays a direct catalytic role in this reaction. This is tRNA N6-adenosine threonylcarbamoyltransferase from Clostridium perfringens (strain SM101 / Type A).